A 474-amino-acid chain; its full sequence is Hydrogenobyrinate a,c-diamide synthase (474 aa).

The 191-residue stretch at 269–459 folds into the GATase cobBQ-type domain; that stretch reads VVAVAGGQAF…LHTHWAGCPQ (191 aa). Catalysis depends on Cys352, which acts as the Nucleophile.

This sequence belongs to the CobB/CbiA family. The cofactor is Mg(2+).

It catalyses the reaction hydrogenobyrinate + 2 L-glutamine + 2 ATP + 2 H2O = hydrogenobyrinate a,c-diamide + 2 L-glutamate + 2 ADP + 2 phosphate + 2 H(+). The protein operates within cofactor biosynthesis; adenosylcobalamin biosynthesis; cob(II)yrinate a,c-diamide from precorrin-2 (aerobic route): step 9/10. Catalyzes the ATP-dependent amidation of the two carboxylate groups at positions a and c of hydrogenobyrinate, using either L-glutamine or ammonia as the nitrogen source. The protein is Hydrogenobyrinate a,c-diamide synthase of Thermobifida fusca (strain YX).